A 533-amino-acid polypeptide reads, in one-letter code: Tyrosine-protein kinase transforming protein Fps (533 aa).

Residues 1-46 form a disordered region; sequence ASGQLHRPQPQEHTSTSAAAGTWRHTQASESRHRLPHCSAAPSHQD. The segment covering 11 to 29 has biased composition (polar residues); it reads QEHTSTSAAAGTWRHTQAS. In terms of domain architecture, F-BAR; degenerate spans 50 to 124; it reads MGFGPELWCP…LQEDRQSVCS (75 aa). The SH2 domain maps to 171–260; the sequence is WYHGAIPRSE…KSGIVLTRAV (90 aa). The 254-residue stretch at 272–525 folds into the Protein kinase domain; the sequence is VLLGERIGRG…PSFGAVHQDL (254 aa). Residues 278–286 and lysine 301 contribute to the ATP site; that span reads IGRGNFGEV. The Proton acceptor role is filled by aspartate 394. Phosphotyrosine; by autocatalysis is present on tyrosine 424.

This sequence belongs to the protein kinase superfamily. Tyr protein kinase family. Fes/fps subfamily.

The catalysed reaction is L-tyrosyl-[protein] + ATP = O-phospho-L-tyrosyl-[protein] + ADP + H(+). The protein is Tyrosine-protein kinase transforming protein Fps (V-FPS) of Gallus gallus (Chicken).